Consider the following 98-residue polypeptide: Large ribosomal subunit protein uL23 (98 aa).

The protein belongs to the universal ribosomal protein uL23 family. As to quaternary structure, part of the 50S ribosomal subunit. Contacts protein L29, and trigger factor when it is bound to the ribosome.

In terms of biological role, one of the early assembly proteins it binds 23S rRNA. One of the proteins that surrounds the polypeptide exit tunnel on the outside of the ribosome. Forms the main docking site for trigger factor binding to the ribosome. In Marinomonas sp. (strain MWYL1), this protein is Large ribosomal subunit protein uL23.